Reading from the N-terminus, the 418-residue chain is Ankyrin repeat and SOCS box protein 6 (418 aa).

6 ANK repeats span residues glutamate 65 to phenylalanine 95, threonine 100 to arginine 129, histidine 134 to alanine 164, asparagine 168 to alanine 203, cysteine 224 to glutamate 253, and glutamate 258 to cysteine 287. An SOCS box domain is found at alanine 358 to aspartate 413.

The protein belongs to the ankyrin SOCS box (ASB) family. As to quaternary structure, binds APS. Identified in a complex with ELOB and ELOC. Interacts with CUL5 and RNF7. Interacts with SQSTM1. In terms of tissue distribution, detected in adipocytes.

The protein localises to the cytoplasm. The protein operates within protein modification; protein ubiquitination. In terms of biological role, probable substrate-recognition component of a SCF-like ECS (Elongin-Cullin-SOCS-box protein) E3 ubiquitin-protein ligase complex which mediates the ubiquitination and subsequent proteasomal degradation of target proteins. May play a role in the regulation of cell proliferation and autophagy by promoting the ubiquitination and degradation of SQSTM1. The polypeptide is Ankyrin repeat and SOCS box protein 6 (Asb6) (Mus musculus (Mouse)).